The following is a 90-amino-acid chain: Co-chaperonin GroES (90 aa).

This sequence belongs to the GroES chaperonin family. Heptamer of 7 subunits arranged in a ring. Interacts with the chaperonin GroEL.

It is found in the cytoplasm. Together with the chaperonin GroEL, plays an essential role in assisting protein folding. The GroEL-GroES system forms a nano-cage that allows encapsulation of the non-native substrate proteins and provides a physical environment optimized to promote and accelerate protein folding. GroES binds to the apical surface of the GroEL ring, thereby capping the opening of the GroEL channel. The polypeptide is Co-chaperonin GroES (Fusobacterium nucleatum subsp. polymorphum (Fusobacterium polymorphum)).